A 307-amino-acid chain; its full sequence is Elongation factor Ts (307 aa).

Residues 80-83 are involved in Mg(2+) ion dislocation from EF-Tu; sequence TDFV.

This sequence belongs to the EF-Ts family.

It localises to the cytoplasm. In terms of biological role, associates with the EF-Tu.GDP complex and induces the exchange of GDP to GTP. It remains bound to the aminoacyl-tRNA.EF-Tu.GTP complex up to the GTP hydrolysis stage on the ribosome. The chain is Elongation factor Ts from Variovorax paradoxus (strain S110).